A 454-amino-acid polypeptide reads, in one-letter code: F-box/WD repeat-containing protein 2 (454 aa).

Residues Arg-54–Ala-101 enclose the F-box domain. WD repeat units lie at residues Gly-146–Gly-183, Gln-185–His-221, Gly-224–Thr-265, and Leu-276–Cys-314. At Lys-298 the chain carries N6-acetyllysine.

In terms of assembly, directly interacts with SKP1 and CUL1.

In terms of biological role, substrate-recognition component of the SCF (SKP1-CUL1-F-box protein)-type E3 ubiquitin ligase complex. The sequence is that of F-box/WD repeat-containing protein 2 from Rattus norvegicus (Rat).